Consider the following 170-residue polypeptide: Zinc finger matrin-type protein 5 (170 aa).

A C3H1-type zinc finger spans residues 51–79 (EQNKRPCRKFLLTGQCDFGSNCRFSHMSE). The segment at 150–170 (PPSLRAPPPGGWPLQPRVQWG) is disordered.

In terms of assembly, component of the U11/U12 snRNPs that are part of the U12-type spliceosome. Not found in the major spliceosome.

It is found in the nucleus. This chain is Zinc finger matrin-type protein 5 (ZMAT5), found in Homo sapiens (Human).